A 672-amino-acid chain; its full sequence is Putative sodium/calcium exchanger 7 (672 aa).

A signal peptide spans 1–23 (MAQPSILFSLTLIFLISIKSCDA). 12 helical membrane passes run 88–108 (VILI…VSSA), 130–150 (VAGV…GSIA), 164–184 (LGEL…TIIL), 196–216 (IRDL…FVFY), 221–241 (LWMP…VIGA), 451–471 (LTLL…QFFL), 479–499 (PGLW…IMVF), 522–542 (IAWI…LGVV), 551–571 (GLTI…VSVV), 581–601 (AAAI…PFTI), 620–640 (LILF…VQKF), and 649–669 (VLIS…TGVL).

This sequence belongs to the Ca(2+):cation antiporter (CaCA) (TC 2.A.19) family.

The protein resides in the membrane. The chain is Putative sodium/calcium exchanger 7 (ncx-7) from Caenorhabditis elegans.